The chain runs to 156 residues: ATP synthase subunit b (156 aa).

A helical transmembrane segment spans residues 11-31; it reads AIAFVLFVLFCMKYVWPPLMA.

The protein belongs to the ATPase B chain family. In terms of assembly, F-type ATPases have 2 components, F(1) - the catalytic core - and F(0) - the membrane proton channel. F(1) has five subunits: alpha(3), beta(3), gamma(1), delta(1), epsilon(1). F(0) has three main subunits: a(1), b(2) and c(10-14). The alpha and beta chains form an alternating ring which encloses part of the gamma chain. F(1) is attached to F(0) by a central stalk formed by the gamma and epsilon chains, while a peripheral stalk is formed by the delta and b chains.

The protein localises to the cell inner membrane. Its function is as follows. F(1)F(0) ATP synthase produces ATP from ADP in the presence of a proton or sodium gradient. F-type ATPases consist of two structural domains, F(1) containing the extramembraneous catalytic core and F(0) containing the membrane proton channel, linked together by a central stalk and a peripheral stalk. During catalysis, ATP synthesis in the catalytic domain of F(1) is coupled via a rotary mechanism of the central stalk subunits to proton translocation. In terms of biological role, component of the F(0) channel, it forms part of the peripheral stalk, linking F(1) to F(0). In Shigella boydii serotype 18 (strain CDC 3083-94 / BS512), this protein is ATP synthase subunit b.